We begin with the raw amino-acid sequence, 643 residues long: DNA gyrase subunit B (643 aa).

The region spanning 428-542 (SEIFLVEGDS…AGYVYIAQPP (115 aa)) is the Toprim domain. Residues Glu434, Asp507, and Asp509 each contribute to the Mg(2+) site.

This sequence belongs to the type II topoisomerase GyrB family. Heterotetramer, composed of two GyrA and two GyrB chains. In the heterotetramer, GyrA contains the active site tyrosine that forms a transient covalent intermediate with DNA, while GyrB binds cofactors and catalyzes ATP hydrolysis. It depends on Mg(2+) as a cofactor. The cofactor is Mn(2+). Ca(2+) is required as a cofactor.

The protein resides in the cytoplasm. It catalyses the reaction ATP-dependent breakage, passage and rejoining of double-stranded DNA.. A type II topoisomerase that negatively supercoils closed circular double-stranded (ds) DNA in an ATP-dependent manner to modulate DNA topology and maintain chromosomes in an underwound state. Negative supercoiling favors strand separation, and DNA replication, transcription, recombination and repair, all of which involve strand separation. Also able to catalyze the interconversion of other topological isomers of dsDNA rings, including catenanes and knotted rings. Type II topoisomerases break and join 2 DNA strands simultaneously in an ATP-dependent manner. In Staphylococcus epidermidis (strain ATCC 35984 / DSM 28319 / BCRC 17069 / CCUG 31568 / BM 3577 / RP62A), this protein is DNA gyrase subunit B.